Reading from the N-terminus, the 221-residue chain is Immunoregulatory peptides (221 aa).

Residues 1 to 19 (MNYLCLVVTLVAVAGAISG) form the signal peptide. Residues 20-45 (EKFSDDNTGYQSTPSLRIRTTPGRRR) constitute a propeptide that is removed on maturation. The segment at 21–155 (KFSDDNTGYQ…PRTIGPPYTR (135 aa)) is disordered. Residues 25–34 (DNTGYQSTPS) are compositionally biased toward polar residues. Low complexity predominate over residues 48–69 (PRTIGPPYTRRTLRTTTDYSTT). Composition is skewed to polar residues over residues 70-85 (VENGNLTTPAANSTEK) and 123-133 (NGTTPAANSTE). Positions 191 to 221 (EISWTFGPLYTWRTTKGYGTTLETTNATSTS) are excised as a propeptide.

Salivary glands.

It is found in the secreted. Its function is as follows. Suppress host inflammatory response. Exerts significant anti-inflammatory functions, either by directly inhibiting host secretion of inflammatory factors such as tumor necrosis factor-alpha (TNF), monocyte chemotactic protein-1 (CCL2), and interferon-gamma (IFNG) or by indirectly increasing the secretion of immunosuppressant cytokine of interleukin-10 (IL10). Also potently scavenges free radical in vitro in a rapid manner. All tested concentrations of this peptide have little effect on the cell viability. In vivo, inhibits hind paw adjuvant-induced inflammation in mouse in a dose-dependent manner. Functionally, suppress host inflammatory response. Exerts significant anti-inflammatory functions, either by directly inhibiting host secretion of inflammatory factors such as tumor necrosis factor-alpha (TNF), monocyte chemotactic protein-1 (CCL2), and interferon-gamma (IFNG) or by indirectly increasing the secretion of immunosuppressant cytokine of interleukin-10 (IL10). Also potently scavenges free radical in vitro in a rapid manner. Low concentrations of this peptide have little effect on the cell viability, whereas high concentrations increase the cell viability by 10-20%. In vivo, inhibits hind paw adjuvant-induced inflammation in mouse in a dose-dependent manner. In terms of biological role, not studied but probably similar to Hyalomin-B1. The polypeptide is Immunoregulatory peptides (Hyalomma asiaticum asiaticum (Tick)).